The primary structure comprises 1481 residues: Cystic fibrosis transmembrane conductance regulator (1481 aa).

At 1–77 (MQRSPLEKAS…KLINALRRCF (77 aa)) the chain is on the cytoplasmic side. A helical membrane pass occupies residues 78 to 98 (FWRFTFYGILLYLGEVTKAVQ). Residues 81-365 (FTFYGILLYL…WAVQTWYDSL (285 aa)) form the ABC transmembrane type-1 1 domain. Residues 99–122 (PLLLGRIIASYDPDNKTERSIAIY) lie on the Extracellular side of the membrane. Residues 123–146 (LGIGLCLLFIVRTLLLHPAIFGLH) traverse the membrane as a helical segment. At 147–195 (HIGMQMRIAMFSLIYKKTLKLSSRVLDKISIGQLVSLLSNNLNKFDEGL) the chain is on the cytoplasmic side. The helical transmembrane segment at 196–216 (ALAHFVWIAPLQVALLMGLIW) threads the bilayer. The Extracellular portion of the chain corresponds to 217–222 (ELLQAS). The helical transmembrane segment at 223 to 243 (AFCGLGFLIVLALFQAGLGRM) threads the bilayer. Residues 244 to 298 (MMKYRDQRAGKINERLVITSEMIENIQSVKAYCWEEAMEKMIENLRQTELKLTRK) lie on the Cytoplasmic side of the membrane. The helical transmembrane segment at 299–319 (AAYVRYFNSSAFFFSGFFVVF) threads the bilayer. At 320-339 (LSVLPYALIKGIALRKIFTT) the chain is on the extracellular side. A helical membrane pass occupies residues 340–358 (ISFCIVLRMAVTRQFPWAV). At 359–858 (QTWYDSLGAI…YLRYITLHKS (500 aa)) the chain is on the cytoplasmic side. ATP contacts are provided by residues Trp401, Ser434, 458-465 (GSTGAGKT), and Gln493. One can recognise an ABC transporter 1 domain in the interval 423-646 (NGDDNLFFSN…RPDFSSKLMG (224 aa)). The S-palmitoyl cysteine moiety is linked to residue Cys524. Phosphoserine occurs at positions 549 and 660. The interval 654 to 831 (SSERRNSILT…EEINEEDLKE (178 aa)) is disordered R region. Ser670 carries the phosphoserine; by PKA modification. Phosphoserine is present on Ser686. A Glycyl lysine isopeptide (Lys-Gly) (interchain with G-Cter in ubiquitin) cross-link involves residue Lys688. Residues Ser700 and Ser712 each carry the phosphoserine modification. A Phosphothreonine modification is found at Thr717. Phosphoserine is present on residues Ser737, Ser753, Ser768, Ser790, Ser795, and Ser813. Residues 859-879 (LIFVLIWCLVIFLAEVAASLV) traverse the membrane as a helical segment. In terms of domain architecture, ABC transmembrane type-1 2 spans 859-1155 (LIFVLIWCLV…AVNSSIDVDS (297 aa)). Topologically, residues 880–918 (LLWLLGNTRFQDKGNSTYSRNNSYAVIITNTSSYYVFYI) are extracellular. N-linked (GlcNAc...) asparagine glycosylation is found at Asn894, Asn900, and Asn909. The discontinuously helical transmembrane segment at 919 to 939 (YVGVADTLLALGFFRGLPLVH) threads the bilayer. Residues 940 to 990 (TLITVSKILHHKMLHSVLQAPMSTLNTLKAGGILNRFSKDIAILDDLLPLT) lie on the Cytoplasmic side of the membrane. A helical transmembrane segment spans residues 991–1011 (IFDFIQLLLIVIGAIAVVSVL). Over 1012–1013 (QP) the chain is Extracellular. The helical transmembrane segment at 1014–1034 (YIFLATVPVIAAFILLRAYFL) threads the bilayer. Residues 1035 to 1095 (QTSQQLKQLE…TASWFLYLST (61 aa)) lie on the Cytoplasmic side of the membrane. A helical transmembrane segment spans residues 1096 to 1116 (LRWFQMRIEMIFVIFFIAVTF). At 1117–1130 (ISILTTGEGEGTVG) the chain is on the extracellular side. Residues 1131 to 1151 (IILTLAMNIMSTLQWAVNSSI) form a helical membrane-spanning segment. At 1152-1481 (DVDSLMRSVS…TEEEVQETRL (330 aa)) the chain is on the cytoplasmic side. In terms of domain architecture, ABC transporter 2 spans 1211-1444 (MTIKDLTAKY…KSLFRQAISH (234 aa)). ATP contacts are provided by residues Tyr1220 and 1245–1252 (GRTGSGKS). The segment at 1387–1481 (RALKQAFADC…TEEEVQETRL (95 aa)) is interaction with GORASP2. Cys1396 is lipidated: S-palmitoyl cysteine. A phosphoserine mark is found at Ser1445 and Ser1457. Residues 1453–1481 (HRNSSKYKSRPQIASLKEETEEEVQETRL) are disordered. Over residues 1471-1481 (ETEEEVQETRL) the composition is skewed to acidic residues. Residues 1479–1481 (TRL) carry the PDZ-binding motif.

It belongs to the ABC transporter superfamily. ABCC family. CFTR transporter (TC 3.A.1.202) subfamily. As to quaternary structure, monomer; does not require oligomerization for channel activity. May form oligomers in the membrane. Interacts with SLC26A3, SLC26A6 and NHERF1. Interacts with SHANK2. Interacts with MYO6. Interacts (via C-terminus) with GOPC (via PDZ domain); this promotes CFTR internalization and thereby decreases channel activity. Interacts with SLC4A7 through NHERF1. Found in a complex with MYO5B and RAB11A. Interacts with ANO1. Interacts with SLC26A8. Interacts with AHCYL1; the interaction increases CFTR activity. Interacts with CSE1L. The core-glycosylated form interacts with GORASP2 (via PDZ GRASP-type 1 domain) in respone to ER stress. Interacts with MARCHF2; the interaction leads to CFTR ubiqtuitination and degradation. Interacts with ADGRG2. N-glycosylated. Post-translationally, phosphorylated; cAMP treatment promotes phosphorylation and activates the channel. Dephosphorylation decreases the ATPase activity (in vitro). Phosphorylation at PKA sites activates the channel. Phosphorylation at PKC sites enhances the response to phosphorylation by PKA. Phosphorylated by AMPK; this inhibits channel activity. In terms of processing, ubiquitinated, leading to its degradation in the lysosome. Deubiquitination by USP10 in early endosomes enhances its endocytic recycling to the cell membrane. Ubiquitinated by RNF185 during ER stress. Ubiquitinated by MARCHF2.

It is found in the apical cell membrane. The protein resides in the early endosome membrane. The protein localises to the cell membrane. Its subcellular location is the recycling endosome membrane. It localises to the endoplasmic reticulum membrane. It is found in the nucleus. The catalysed reaction is ATP + H2O + closed Cl(-) channel = ADP + phosphate + open Cl(-) channel.. The enzyme catalyses chloride(in) = chloride(out). It carries out the reaction hydrogencarbonate(in) = hydrogencarbonate(out). It catalyses the reaction ATP + H2O = ADP + phosphate + H(+). Epithelial ion channel that plays an important role in the regulation of epithelial ion and water transport and fluid homeostasis. Mediates the transport of chloride ions across the cell membrane. Possesses an intrinsic ATPase activity and utilizes ATP to gate its channel; the passive flow of anions through the channel is gated by cycles of ATP binding and hydrolysis by the ATP-binding domains. The ion channel is also permeable to HCO(3)(-); selectivity depends on the extracellular chloride concentration. Exerts its function also by modulating the activity of other ion channels and transporters. Contributes to the regulation of the pH and the ion content of the epithelial fluid layer. Modulates the activity of the epithelial sodium channel (ENaC) complex, in part by regulating the cell surface expression of the ENaC complex. May regulate bicarbonate secretion and salvage in epithelial cells by regulating the transporter SLC4A7. Can inhibit the chloride channel activity of ANO1. Plays a role in the chloride and bicarbonate homeostasis during sperm epididymal maturation and capacitation. In Saimiri boliviensis boliviensis (Bolivian squirrel monkey), this protein is Cystic fibrosis transmembrane conductance regulator.